Here is a 397-residue protein sequence, read N- to C-terminus: Lysophospholipid transporter LplT (397 aa).

At 1–17 the chain is on the periplasmic side; it reads MSESVHTNTSLWSKGMK. A helical transmembrane segment spans residues 18–38; sequence AVIVAQFLSAFGDNALLFATL. Topologically, residues 39-52 are cytoplasmic; sequence ALLKAQFYPEWSQP. The helical transmembrane segment at 53–73 threads the bilayer; that stretch reads ILQMVFVGAYILFAPFVGQVA. The Periplasmic segment spans residues 74–90; it reads DSFAKGRVMMFANGLKL. A helical membrane pass occupies residues 91-111; the sequence is LGAASICFGINPFLGYTLVGV. Topologically, residues 112–144 are cytoplasmic; it reads GAAAYSPAKYGILGELTTGSKLVKANGLMEAST. A helical transmembrane segment spans residues 145–165; sequence IAAILLGSVAGGVLADWHVLV. Residue Ala-166 is a topological domain, periplasmic. Residues 167-187 form a helical membrane-spanning segment; it reads LAACALAYGGAVVANIYIPKL. The Cytoplasmic segment spans residues 188–226; that stretch reads AAARPGQSWNLINMTRSFLNACTSLWRNGETRFSLVGTS. Residues 227-247 traverse the membrane as a helical segment; that stretch reads LFWGAGVTLRFLLVLWVPVAL. Topologically, residues 248 to 256 are periplasmic; that stretch reads GITDNATPT. A helical transmembrane segment spans residues 257–277; sequence YLNAMVAIGIVVGAGAAAKLV. The Cytoplasmic segment spans residues 278–280; the sequence is TLE. The helical transmembrane segment at 281-301 threads the bilayer; it reads TVSRCMPAGILIGVVVLIFSL. Over 302–304 the chain is Periplasmic; that stretch reads QHE. The helical transmembrane segment at 305–325 threads the bilayer; sequence LLPAYALLMLIGVLGGFFVVP. The Cytoplasmic segment spans residues 326-343; that stretch reads LNALLQERGKKSVGAGNA. A helical membrane pass occupies residues 344–364; it reads IAVQNLGENSAMLLMLGIYSL. At 365 to 366 the chain is on the periplasmic side; that stretch reads AV. Residues 367–387 traverse the membrane as a helical segment; sequence MVGIPVVPIGIGFGALFALAI. Residues 388-397 lie on the Cytoplasmic side of the membrane; the sequence is TALWIWQRRH.

It belongs to the major facilitator superfamily. LplT (TC 2.A.1.42) family.

The protein resides in the cell inner membrane. Its function is as follows. Catalyzes the facilitated diffusion of 2-acyl-glycero-3-phosphoethanolamine (2-acyl-GPE) into the cell. The chain is Lysophospholipid transporter LplT from Escherichia coli (strain SMS-3-5 / SECEC).